The following is a 124-amino-acid chain: Putative C(50) carotenoid beta-cyclase subunit A (124 aa).

Transmembrane regions (helical) follow at residues 1–21 (MIGL…LVID), 34–54 (AAAL…VLGV), and 78–98 (FEEV…AAGV).

The protein belongs to the lycopene beta-cyclase family. As to quaternary structure, may form a complex with LbtBC.

The protein resides in the cell membrane. Its pathway is carotenoid biosynthesis. Functionally, involved in the biosynthesis of C(50) beta-cyclic carotenoids. May have C(50) carotenoid beta-cyclase activity and produce the C(50) beta-cyclic carotenoid C.p.450 from the C(50) carotenoid dihydrobisanhydrobacterioruberin (DH-BABR). This chain is Putative C(50) carotenoid beta-cyclase subunit A, found in Dietzia sp. (strain CQ4).